Consider the following 671-residue polypeptide: DNA ligase (671 aa).

Residues 32–36, 81–82, and Glu-113 each bind NAD(+); these read DAEYD and SL. The active-site N6-AMP-lysine intermediate is the Lys-115. Positions 136, 173, 290, and 314 each coordinate NAD(+). Cys-408, Cys-411, Cys-426, and Cys-432 together coordinate Zn(2+). The region spanning 593–671 is the BRCT domain; that stretch reads EIDSPFAGKT…EAEMLRLLGS (79 aa).

It belongs to the NAD-dependent DNA ligase family. LigA subfamily. Requires Mg(2+) as cofactor. Mn(2+) serves as cofactor.

The enzyme catalyses NAD(+) + (deoxyribonucleotide)n-3'-hydroxyl + 5'-phospho-(deoxyribonucleotide)m = (deoxyribonucleotide)n+m + AMP + beta-nicotinamide D-nucleotide.. Functionally, DNA ligase that catalyzes the formation of phosphodiester linkages between 5'-phosphoryl and 3'-hydroxyl groups in double-stranded DNA using NAD as a coenzyme and as the energy source for the reaction. It is essential for DNA replication and repair of damaged DNA. This chain is DNA ligase, found in Shigella flexneri serotype 5b (strain 8401).